A 532-amino-acid chain; its full sequence is NADH-quinone oxidoreductase subunit N 2 (532 aa).

Helical transmembrane passes span 37 to 57 (VAPP…DLFL), 63 to 83 (RLLG…LIPL), 107 to 127 (FTLV…LLSL), 133 to 153 (LPAG…ALLP), 158 to 178 (LATL…LVGI), 192 to 212 (FFLS…FVYA), 241 to 261 (VALT…HFWV), 276 to 296 (LSVV…VVAF), 302 to 322 (VWGP…NVAA), 336 to 356 (LLAW…AAAA), 367 to 387 (VAYA…AAVV), 411 to 431 (LALG…IGLF), 444 to 464 (GLGW…YYYL), and 504 to 524 (TAIV…QTVL).

The protein belongs to the complex I subunit 2 family. In terms of assembly, NDH-1 is composed of 14 different subunits. Subunits NuoA, H, J, K, L, M, N constitute the membrane sector of the complex.

Its subcellular location is the cell membrane. The catalysed reaction is a quinone + NADH + 5 H(+)(in) = a quinol + NAD(+) + 4 H(+)(out). Functionally, NDH-1 shuttles electrons from NADH, via FMN and iron-sulfur (Fe-S) centers, to quinones in the respiratory chain. The immediate electron acceptor for the enzyme in this species is believed to be a menaquinone. Couples the redox reaction to proton translocation (for every two electrons transferred, four hydrogen ions are translocated across the cytoplasmic membrane), and thus conserves the redox energy in a proton gradient. The polypeptide is NADH-quinone oxidoreductase subunit N 2 (Streptomyces griseus subsp. griseus (strain JCM 4626 / CBS 651.72 / NBRC 13350 / KCC S-0626 / ISP 5235)).